A 271-amino-acid chain; its full sequence is Type III pantothenate kinase (271 aa).

6–13 (DVRNTNIV) provides a ligand contact to ATP. Position 109-112 (109-112 (GADR)) interacts with substrate. Aspartate 111 acts as the Proton acceptor in catalysis. K(+) is bound at residue aspartate 131. Residue threonine 134 participates in ATP binding. Threonine 186 lines the substrate pocket.

It belongs to the type III pantothenate kinase family. As to quaternary structure, homodimer. NH4(+) serves as cofactor. It depends on K(+) as a cofactor.

The protein localises to the cytoplasm. It catalyses the reaction (R)-pantothenate + ATP = (R)-4'-phosphopantothenate + ADP + H(+). It participates in cofactor biosynthesis; coenzyme A biosynthesis; CoA from (R)-pantothenate: step 1/5. In terms of biological role, catalyzes the phosphorylation of pantothenate (Pan), the first step in CoA biosynthesis. This is Type III pantothenate kinase from Rhodococcus jostii (strain RHA1).